Reading from the N-terminus, the 362-residue chain is MSTNNSVQPVSPASELLSNTTCQLEEDLSISFSIIFMTVGILSNSLAIAILMKAYQRFRQKYKSSFLLLASALVITDFFGHLINGTIAVFVYASDKDWIYFDKSNILCSIFGICMVFSGLCPLFLGSLMAIERCIGVTKPIFHSTKITTKHVKMMLSGVCFFAVFVALLPILGHRDYKIQASRTWCFYKTDQIKDWEDRFYLLLFAFLGLLALGISFVCNAITGISLLKVKFRSQQHRQGRSHHFEMVIQLLGIMCVSCICWSPFLVTMASIGMNIQDFKDSCERTLFTLRMATWNQILDPWVYILLRKAVLRNLYVCTRRCCGVHVISLHVWELSSIKNSLKVAAISDLPVTEKVTQQTST.

Residues 1–31 are Extracellular-facing; the sequence is MSTNNSVQPVSPASELLSNTTCQLEEDLSIS. Residues N4 and N19 are each glycosylated (N-linked (GlcNAc...) asparagine). The chain crosses the membrane as a helical span at residues 32-54; it reads FSIIFMTVGILSNSLAIAILMKA. The Cytoplasmic portion of the chain corresponds to 55–69; that stretch reads YQRFRQKYKSSFLLL. Residues 70–90 form a helical membrane-spanning segment; that stretch reads ASALVITDFFGHLINGTIAVF. Residues 91–109 lie on the Extracellular side of the membrane; sequence VYASDKDWIYFDKSNILCS. C108 and C186 form a disulfide bridge. The helical transmembrane segment at 110–131 threads the bilayer; sequence IFGICMVFSGLCPLFLGSLMAI. The Cytoplasmic segment spans residues 132 to 152; sequence ERCIGVTKPIFHSTKITTKHV. Residues 153–175 form a helical membrane-spanning segment; that stretch reads KMMLSGVCFFAVFVALLPILGHR. Over 176-198 the chain is Extracellular; sequence DYKIQASRTWCFYKTDQIKDWED. Residues 199-224 form a helical membrane-spanning segment; the sequence is RFYLLLFAFLGLLALGISFVCNAITG. The Cytoplasmic segment spans residues 225 to 250; the sequence is ISLLKVKFRSQQHRQGRSHHFEMVIQ. The helical transmembrane segment at 251–267 threads the bilayer; the sequence is LLGIMCVSCICWSPFLV. The Extracellular portion of the chain corresponds to 268–285; sequence TMASIGMNIQDFKDSCER. The chain crosses the membrane as a helical span at residues 286 to 307; that stretch reads TLFTLRMATWNQILDPWVYILL. Residues 308–362 are Cytoplasmic-facing; that stretch reads RKAVLRNLYVCTRRCCGVHVISLHVWELSSIKNSLKVAAISDLPVTEKVTQQTST.

Belongs to the G-protein coupled receptor 1 family.

Its subcellular location is the cell membrane. Its function is as follows. Receptor for prostaglandin F2-alpha (PGF2-alpha). The activity of this receptor is mediated by G proteins which activate a phosphatidylinositol-calcium second messenger system. Initiates luteolysis in the corpus luteum. The protein is Prostaglandin F2-alpha receptor (PTGFR) of Ovis aries (Sheep).